The chain runs to 244 residues: Tubulin-folding cofactor B (244 aa).

Met-1 is subject to N-acetylmethionine. Phosphotyrosine is present on Tyr-98. Ser-110 is subject to Phosphoserine. The CAP-Gly domain maps to Gly-183 to Lys-225. Lys-219 is modified (N6-acetyllysine).

It belongs to the TBCB family. As to quaternary structure, supercomplex made of cofactors A to E. Cofactors A and D function by capturing and stabilizing tubulin in a quasi-native conformation. Cofactor E binds to the cofactor D-tubulin complex; interaction with cofactor C then causes the release of tubulin polypeptides that are committed to the native state. Cofactors B and E can form a heterodimer which binds to alpha-tubulin and enhances their ability to dissociate tubulin heterodimers. Interacts with GAN. Interacts with DCTN1. Ubiquitinated in the presence of GAN which targets it for degradation by the proteasome. Post-translationally, phosphorylation by PAK1 is required for normal function.

The protein resides in the cytoplasm. The protein localises to the cytoskeleton. Binds to alpha-tubulin folding intermediates after their interaction with cytosolic chaperonin in the pathway leading from newly synthesized tubulin to properly folded heterodimer. Involved in regulation of tubulin heterodimer dissociation. May function as a negative regulator of axonal growth. The protein is Tubulin-folding cofactor B (TBCB) of Bos taurus (Bovine).